Here is an 857-residue protein sequence, read N- to C-terminus: Autoinducer 2 sensor kinase/phosphatase LuxQ (857 aa).

Transmembrane regions (helical) follow at residues 14 to 34 (IASF…VSVL) and 283 to 303 (FWMA…RWWL). Positions 486 to 706 (KMSHELRTPL…RFEIQLPIEL (221 aa)) constitute a Histidine kinase domain. H489 bears the Phosphohistidine; by autocatalysis mark. The region spanning 731–846 (RVLLVEDNHT…TLHKALEHFK (116 aa)) is the Response regulatory domain. 4-aspartylphosphate is present on D780.

In terms of assembly, binds the complex formed by AI-2 and LuxP.

The protein resides in the cell inner membrane. The enzyme catalyses ATP + protein L-histidine = ADP + protein N-phospho-L-histidine.. Its function is as follows. At low cell density, in absence of AI-2 (autoinducer 2), LuxQ has a kinase activity and autophosphorylates on a histidine residue. The phosphoryl group is then transferred to an aspartate residue in the response regulator domain. The phosphoryl group is transferred to LuxU, and ultimately to LuxO. At high cell density, in the presence of AI-2, the kinase activity is inactivated, and the response regulator domain has a phosphatase activity. This is Autoinducer 2 sensor kinase/phosphatase LuxQ (luxQ) from Vibrio cholerae serotype O1 (strain ATCC 39315 / El Tor Inaba N16961).